Consider the following 250-residue polypeptide: 2,3-bisphosphoglycerate-dependent phosphoglycerate mutase (250 aa).

Substrate-binding positions include 10–17, 23–24, arginine 62, 89–92, lysine 100, 116–117, and 185–186; these read RHGESQWN, TG, ERHY, RR, and GN. The Tele-phosphohistidine intermediate role is filled by histidine 11. Glutamate 89 serves as the catalytic Proton donor/acceptor.

Belongs to the phosphoglycerate mutase family. BPG-dependent PGAM subfamily. Homodimer.

It carries out the reaction (2R)-2-phosphoglycerate = (2R)-3-phosphoglycerate. The protein operates within carbohydrate degradation; glycolysis; pyruvate from D-glyceraldehyde 3-phosphate: step 3/5. Functionally, catalyzes the interconversion of 2-phosphoglycerate and 3-phosphoglycerate. This is 2,3-bisphosphoglycerate-dependent phosphoglycerate mutase from Serratia proteamaculans (strain 568).